Here is a 429-residue protein sequence, read N- to C-terminus: Probable alcohol acetyltransferase orf1 (429 aa).

Belongs to the alcohol acetyltransferase FCK4 family.

The protein operates within secondary metabolite biosynthesis. Probable alcohol acetyltransferase; part of the gene cluster that mediates the biosynthesis of the glycolipid biosurfactant ustilagic acid (UA). UA is a secreted cellobiose glycolipid that is toxic for many microorganisms and confers biocontrol activity to U.maydis. UA consists of 15,16-dihydroxypalmitic or 2,15,16-trihydroxypalmitic acid, which is O-glycosidically linked to cellobiose at its terminal hydroxyl group. In addition, the cellobiose moiety is acetylated and acylated with a short-chain hydroxy fatty acid. UA biosynthesis starts with omega-hydroxylation of palmitic acid catalyzed by the cytochrome P450 monooxygenase cyp1. Terminal hydroxylation of palmitic acid precedes subterminal hydroxylation catalyzed by the cytochrome P450 monooxygenase cyp2. Sequential glucosylation of the hydroxy fatty acid is probably catalyzed by the glycosyltransferase ugt1. The cellobiose lipid is further decorated by acetylation of the proximal glucose residue and by acylation with a short-chain beta-hydroxy fatty acid at the distal glucose residue. The acyltransferase uat1 may be a good candidate for catalyzing either acetylation or acylation of the cellobiose lipid. The fatty acid synthase fas2 may be involved in synthesis of the carbon backbone of the short-chain beta-hydroxy fatty acid esterified to the cellobiose disaccharide. The secreted UA consists of a mixture of both alpha-hydroxylated and non-hydroxylated glycolipids; therefore, alpha-hydroxylation of the long-chain fatty, catalyzed by the fatty acid hydroxylase ahd1, occurs late in UA biosynthesis and may be the last step before secretion. This is Probable alcohol acetyltransferase orf1 from Mycosarcoma maydis (Corn smut fungus).